The sequence spans 449 residues: MRECISVHVGQAGVQIGNACWELFCLEHGIQADGTFGAQASKIHDDDSFTTFFSETGNGKHVPRAVMVDLEPTVVDEVRAGTYRHLFHPEQLITGKEDAANNYARGHYTVGKESIDLVLDRIRKLTDACSGLQGFLIFHSFGGGTGSGFTSLLMERLSLDYGKKSKLEFAIYPAPQVSTAVVEPYNSILTTHTTLEHSDCAFMVDNEAIYDICRRNLDIERPTYTNLNRLISQIVSSITASLRFDGALNVDLTEFQTNLVPYPRIHFPLVTYAPIISAEKAYHEQLSVAEITSSCFEPNSQMVKCDPRHGKYMACCMLYRGDVVPKDVNVAIAAIKTKRTIQFVDWCPTGFKVGINYQPPTVVPGGDLAKVQRAVCMLSNTTAIAEAWARLDHKFDLMYAKRAFVHWYVGEGMEEGEFSEAREDLAALEKDYEEVGTDSFEEENEGEEF.

An MREC motif motif is present at residues 1 to 4 (MREC). Residues Q11, E71, S140, G144, T145, T179, N206, and N228 each coordinate GTP. E71 contacts Mg(2+). The active site involves E254.

The protein belongs to the tubulin family. In terms of assembly, dimer of alpha and beta chains. A typical microtubule is a hollow water-filled tube with an outer diameter of 25 nm and an inner diameter of 15 nM. Alpha-beta heterodimers associate head-to-tail to form protofilaments running lengthwise along the microtubule wall with the beta-tubulin subunit facing the microtubule plus end conferring a structural polarity. Microtubules usually have 13 protofilaments but different protofilament numbers can be found in some organisms and specialized cells. Mg(2+) serves as cofactor. In terms of processing, some glutamate residues at the C-terminus are polyglycylated, resulting in polyglycine chains on the gamma-carboxyl group. Glycylation is mainly limited to tubulin incorporated into axonemes (cilia and flagella) whereas glutamylation is prevalent in neuronal cells, centrioles, axonemes, and the mitotic spindle. Both modifications can coexist on the same protein on adjacent residues, and lowering polyglycylation levels increases polyglutamylation, and reciprocally. Cilia and flagella glycylation is required for their stability and maintenance. Flagella glycylation controls sperm motility. Some glutamate residues at the C-terminus are polyglutamylated, resulting in polyglutamate chains on the gamma-carboxyl group. Polyglutamylation plays a key role in microtubule severing by spastin (SPAST). SPAST preferentially recognizes and acts on microtubules decorated with short polyglutamate tails: severing activity by SPAST increases as the number of glutamates per tubulin rises from one to eight, but decreases beyond this glutamylation threshold. Glutamylation is also involved in cilia motility. Post-translationally, the C-terminal phenylalanine residue is cleaved by MATCAP1/KIAA0895L.

The protein localises to the cytoplasm. It is found in the cytoskeleton. It catalyses the reaction GTP + H2O = GDP + phosphate + H(+). Tubulin is the major constituent of microtubules, a cylinder consisting of laterally associated linear protofilaments composed of alpha- and beta-tubulin heterodimers. Microtubules grow by the addition of GTP-tubulin dimers to the microtubule end, where a stabilizing cap forms. Below the cap, tubulin dimers are in GDP-bound state, owing to GTPase activity of alpha-tubulin. This chain is Tubulin alpha-8 chain (TUBA8), found in Bos taurus (Bovine).